Here is a 329-residue protein sequence, read N- to C-terminus: UDP-2,3-diacylglucosamine pyrophosphatase LpxG (329 aa).

A helical transmembrane segment spans residues 2-24 (FVFVGSTVSLTAIVAAPVLTWIW). Residues Asp-59, His-61, Asp-91, Asn-123, His-257, and His-259 each contribute to the a divalent metal cation site.

This sequence belongs to the metallophosphoesterase superfamily. Requires Mn(2+) as cofactor.

It is found in the cell inner membrane. It catalyses the reaction UDP-2,3-diacyl-alpha-D-glucosamine + H2O = 2,3-diacyl-alpha-D-glucosaminyl 1-phosphate + UMP + 2 H(+). It functions in the pathway glycolipid biosynthesis; lipid IV(A) biosynthesis. Hydrolyzes the pyrophosphate bond of UDP-2,3-diacylglucosamine to form 2,3-diacylglucosamine 1-phosphate (lipid X) and UMP by catalyzing the attack of water at the alpha-P atom. Involved in the biosynthesis of lipid A, a phosphorylated glycolipid that anchors the lipooligosaccharide (LOS) to the outer membrane of the cell. This Chlamydia muridarum (strain MoPn / Nigg) protein is UDP-2,3-diacylglucosamine pyrophosphatase LpxG.